The sequence spans 505 residues: Light-independent protochlorophyllide reductase subunit B (505 aa).

D36 serves as a coordination point for [4Fe-4S] cluster. Catalysis depends on D291, which acts as the Proton donor. 426-427 (GM) lines the substrate pocket.

Belongs to the ChlB/BchB/BchZ family. As to quaternary structure, protochlorophyllide reductase is composed of three subunits; ChlL, ChlN and ChlB. Forms a heterotetramer of two ChlB and two ChlN subunits. [4Fe-4S] cluster serves as cofactor.

The enzyme catalyses chlorophyllide a + oxidized 2[4Fe-4S]-[ferredoxin] + 2 ADP + 2 phosphate = protochlorophyllide a + reduced 2[4Fe-4S]-[ferredoxin] + 2 ATP + 2 H2O. It participates in porphyrin-containing compound metabolism; chlorophyll biosynthesis (light-independent). In terms of biological role, component of the dark-operative protochlorophyllide reductase (DPOR) that uses Mg-ATP and reduced ferredoxin to reduce ring D of protochlorophyllide (Pchlide) to form chlorophyllide a (Chlide). This reaction is light-independent. The NB-protein (ChlN-ChlB) is the catalytic component of the complex. The chain is Light-independent protochlorophyllide reductase subunit B from Gloeobacter violaceus (strain ATCC 29082 / PCC 7421).